Reading from the N-terminus, the 124-residue chain is Fluoride-specific ion channel FluC 2 (124 aa).

Helical transmembrane passes span 9-29 (LGIF…STWL), 34-54 (DFPW…IFLV), 67-87 (LILA…SLML), and 99-119 (FSLV…AYFL). Na(+) contacts are provided by glycine 77 and threonine 80.

The protein belongs to the fluoride channel Fluc/FEX (TC 1.A.43) family.

It is found in the cell membrane. It carries out the reaction fluoride(in) = fluoride(out). With respect to regulation, na(+) is not transported, but it plays an essential structural role and its presence is essential for fluoride channel function. Functionally, fluoride-specific ion channel. Important for reducing fluoride concentration in the cell, thus reducing its toxicity. The chain is Fluoride-specific ion channel FluC 2 from Streptococcus pneumoniae (strain ATCC BAA-255 / R6).